A 339-amino-acid polypeptide reads, in one-letter code: Dihydroorotate dehydrogenase (quinone) (339 aa).

FMN-binding positions include 62–66 (AGMDK) and threonine 86. A substrate-binding site is contributed by lysine 66. Position 111–115 (111–115 (NRMGF)) interacts with substrate. 2 residues coordinate FMN: asparagine 139 and asparagine 172. Substrate is bound at residue asparagine 172. The Nucleophile role is filled by serine 175. Residue asparagine 177 participates in substrate binding. Residues lysine 217 and threonine 245 each coordinate FMN. 246–247 (NT) provides a ligand contact to substrate. FMN is bound by residues glycine 268, glycine 297, and 318–319 (YS).

Belongs to the dihydroorotate dehydrogenase family. Type 2 subfamily. As to quaternary structure, monomer. The cofactor is FMN.

It is found in the cell membrane. It carries out the reaction (S)-dihydroorotate + a quinone = orotate + a quinol. The protein operates within pyrimidine metabolism; UMP biosynthesis via de novo pathway; orotate from (S)-dihydroorotate (quinone route): step 1/1. In terms of biological role, catalyzes the conversion of dihydroorotate to orotate with quinone as electron acceptor. The protein is Dihydroorotate dehydrogenase (quinone) of Shewanella sp. (strain MR-4).